The chain runs to 519 residues: Circadian clock oscillator protein KaiC (519 aa).

KaiC domains are found at residues 1–246 and 260–519; these read MSEK…VNIF and VRVS…GSDS. Residues Gly-48, Thr-49, Gly-50, Lys-51, Thr-52, Leu-53, Lys-223, Leu-224, Arg-225, Thr-227, His-229, Thr-239, Thr-289, Gly-290, Thr-291, Gly-292, Lys-293, Thr-294, and Leu-295 each contribute to the ATP site. Thr-52 lines the Mg(2+) pocket. Thr-294 provides a ligand contact to Mg(2+). Glu-317 serves as a coordination point for Mg(2+). An ATP-binding site is contributed by Trp-330. Ser-430 carries the post-translational modification Phosphoserine; by autocatalysis. At Thr-431 the chain carries Phosphothreonine; by autocatalysis. ATP is bound by residues Arg-450, Lys-456, Met-457, Arg-458, Ser-460, His-462, and Lys-464.

The protein belongs to the KaiC family. Homohexamer; hexamerization is dependent on ATP-binding. The KaiABC complex composition changes during the circadian cycle to control KaiC phosphorylation. Complexes KaiC(6), KaiA(2-4):KaiC(6), KaiB(6):KaiC(6) and KaiC(6):KaiB(6):KaiA(12) are among the most important forms, many form cooperatively. KaiC interacts with SasA, activating its autokinase function and leading to RpaA activation. Mg(2+) is required as a cofactor. Post-translationally, phosphorylated on serine and threonine residues by autocatalysis. Has a 4 step phosphorylation cycle; the autokinase acts first on Thr-431, then Ser-430. When Ser-430 is modified KaiC switches to an autophosphatase mode, acting first on phospho-Thr-431 then phospho-Ser-430.

The enzyme catalyses L-seryl-[protein] + ATP = O-phospho-L-seryl-[protein] + ADP + H(+). It carries out the reaction L-threonyl-[protein] + ATP = O-phospho-L-threonyl-[protein] + ADP + H(+). The catalysed reaction is ATP + H2O = ADP + phosphate + H(+). The interaction with KaiA enhances its phosphorylation status, while the interaction with KaiB decreases it. Its function is as follows. Central component of the KaiABC oscillator complex, which constitutes the main circadian regulator in cyanobacteria. Complex composition changes during the circadian cycle to control KaiC phosphorylation. KaiA stimulates KaiC autophosphorylation, while KaiB sequesters KaiA, leading to KaiC autodephosphorylation. Clock output pathways impact the RpaA transcriptional regulator. KaiC enhances the autophosphorylation activity of SasA, which then transfers its phosphate group to RpaA to activate it. KaiB and KaiC together enhance the phospho-RpaA dephosphatase activity of CikA. Has a weak, temperature-independent ATPase activity; ATPase activity defines the circadian period. The phosphorylation state of KaiC modulates its ATPase activity and effects KaiB binding. In Nostoc sp. (strain PCC 7120 / SAG 25.82 / UTEX 2576), this protein is Circadian clock oscillator protein KaiC.